The chain runs to 1400 residues: MNAISGGLNKVSFTNRKRIRKSFGRIPETTPMPNLIDVQRASYDAFLQMHVSPDSRTNSGLQEVFKSVFPIDDFAGRGRLEFVYYELEEPKYDVEECIQRGMTYAAPLKVVLRLIVWDVDEDTGARSIRDIKEQPVYMGDMPLMTDNGTFVVNGTERVIVSQMHRSPGVFFDHDKGKTHSSGKYLFAARVIPYRGSWLDFEFDAKDLIYVRIDRKRKLPVTTLLYALEGRATEALRAAREAKGESLEIGEIRGMDAEEILTYFYGKVPFTRTRTRDGETAWARPFEPETFRGAKLVEDLVDAETGEVVAKADDKLTARVARQIAVKTRTVLVSRADLIGRYVAEDLFDPNTGEIFADAGEEISEAKLKTFEDAGLDEIPTLAIDQAKGPWIRNTLAADKNASREDALIDIYRVIRPGEPPTSETAEALFRGLFFDAERYDLSAVGRVKMNMRLGLECEDTVRVLRKEDILRTIQIMCELKDGRGQVDDIDNLGNRRVRSVGELMENQYRIGLLRMERAIRERMGSVDIDGVMPHDLINAKPAAAAVREFFGSSQLSQFMDQTNPLSEVTHKRRLSALGPGGLTRERAGFEVRDVHPTHYGRICPIETPEGPNIGLINSLATFAKVNKYGFIETPYRLVKDGKVLDEYKYLSAMEEERLTVAQADAPKLADGTLTEDLVSVRRNGDFRLVKPDEVTAIDVSPRQLVSVAAALIPFLENDDANRALMGSNMQRQAVPLIKSDAPLVGTGMEAPVARDSGATIVARRAGVIDQIDGARIVVRATGEDGTTQGVDIYRLRKFMRSNQSTCINQRPLVRVGDRVGAGDIIADGPSTELGELALGRNVLCAFMPWNGYNFEDSILISERVAREDMFTSIHIEEFEVMARDTKLGQEEITRDIPNVGEEALRNLDEAGIVYIGAEVNPGDILVGKVTPKGESPMTPEEKLLRAIFGEKASDVRDTSLKLPPGVNGTVVDVRVFNRRGVDKDERALAIERAEIERLAKDRDDERAIQERAFLNRLREKLLGQVAGSGYKGVRSGTEITTELLAEIPRGAWRNLTVQDDRVMAEIETLKREFDASVHKLQQRFESKVEKLQRGDEMPPGVMKMVKVFIAVKRKLQPGDKMAGRHGNKGVVSKVVPIEDMPFLEDGTPVDVVLNPLGVPSRMNVGQILETHLGWACANLGRQIGEAVEAYQRDVAERERLHAMLKSVYGEEIYNEQIASMSDAELRELCGNIRKGVPIATPVFDGARITDIEDMLAKAGLDVSGQMTVCDGRTGEQFERKVTVGYMYMLKLGHMVDDKIHARSIGPYSLVTQQPLGGKAQFGGQRFGEMEVWALEAYGAAYTLQEMLTVKSDDVSGRTKVYEAIVREQDNFEAGVPESFNVLTKELKSLGLNVDLNLSVD.

The protein belongs to the RNA polymerase beta chain family. In terms of assembly, the RNAP catalytic core consists of 2 alpha, 1 beta, 1 beta' and 1 omega subunit. When a sigma factor is associated with the core the holoenzyme is formed, which can initiate transcription.

It catalyses the reaction RNA(n) + a ribonucleoside 5'-triphosphate = RNA(n+1) + diphosphate. Functionally, DNA-dependent RNA polymerase catalyzes the transcription of DNA into RNA using the four ribonucleoside triphosphates as substrates. The protein is DNA-directed RNA polymerase subunit beta of Acidiphilium cryptum (strain JF-5).